We begin with the raw amino-acid sequence, 269 residues long: Zinc transporter ZupT (269 aa).

The next 8 membrane-spanning stretches (helical) occupy residues 11 to 31 (IALA…LLVL), 40 to 60 (LLAF…LSEI), 80 to 100 (YGTL…HFIP), 125 to 145 (ALLT…ATFF), 158 to 178 (AFAI…PVYF), 187 to 207 (FSAS…GYWL), 217 to 237 (FGWV…DELL), and 249 to 269 (TVYG…LFKW). Fe(2+) contacts are provided by asparagine 136 and glutamate 139. Zn(2+)-binding residues include glutamate 139 and histidine 164. Fe(2+) contacts are provided by asparagine 165, glutamate 168, and glutamate 197. Glutamate 168 lines the Zn(2+) pocket.

Belongs to the ZIP transporter (TC 2.A.5) family. ZupT subfamily.

Its subcellular location is the cell inner membrane. The catalysed reaction is Zn(2+)(in) = Zn(2+)(out). In terms of biological role, mediates zinc uptake. May also transport other divalent cations. The protein is Zinc transporter ZupT of Stenotrophomonas maltophilia (strain K279a).